The primary structure comprises 259 residues: UPF0246 protein PSPA7_1607 (259 aa).

It belongs to the UPF0246 family.

The protein is UPF0246 protein PSPA7_1607 of Pseudomonas paraeruginosa (strain DSM 24068 / PA7) (Pseudomonas aeruginosa (strain PA7)).